We begin with the raw amino-acid sequence, 251 residues long: 5'-nucleotidase SurE (251 aa).

Residues aspartate 8, aspartate 9, serine 40, and asparagine 95 each contribute to the a divalent metal cation site.

Belongs to the SurE nucleotidase family. A divalent metal cation is required as a cofactor.

The protein resides in the cytoplasm. It carries out the reaction a ribonucleoside 5'-phosphate + H2O = a ribonucleoside + phosphate. Nucleotidase that shows phosphatase activity on nucleoside 5'-monophosphates. This chain is 5'-nucleotidase SurE, found in Lawsonia intracellularis (strain PHE/MN1-00).